The chain runs to 572 residues: Arginine--tRNA ligase (572 aa).

Positions 122 to 132 (PNLAKEMHVGH) match the 'HIGH' region motif.

It belongs to the class-I aminoacyl-tRNA synthetase family. In terms of assembly, monomer.

It is found in the cytoplasm. It catalyses the reaction tRNA(Arg) + L-arginine + ATP = L-arginyl-tRNA(Arg) + AMP + diphosphate. The protein is Arginine--tRNA ligase of Neisseria meningitidis serogroup B (strain ATCC BAA-335 / MC58).